A 152-amino-acid chain; its full sequence is 3-hydroxyacyl-[acyl-carrier-protein] dehydratase FabZ (152 aa).

Residue histidine 54 is part of the active site.

This sequence belongs to the thioester dehydratase family. FabZ subfamily.

The protein localises to the cytoplasm. The catalysed reaction is a (3R)-hydroxyacyl-[ACP] = a (2E)-enoyl-[ACP] + H2O. Its function is as follows. Involved in unsaturated fatty acids biosynthesis. Catalyzes the dehydration of short chain beta-hydroxyacyl-ACPs and long chain saturated and unsaturated beta-hydroxyacyl-ACPs. This is 3-hydroxyacyl-[acyl-carrier-protein] dehydratase FabZ from Shewanella woodyi (strain ATCC 51908 / MS32).